A 311-amino-acid chain; its full sequence is Methionyl-tRNA formyltransferase (311 aa).

112 to 115 (SLLP) serves as a coordination point for (6S)-5,6,7,8-tetrahydrofolate.

It belongs to the Fmt family.

It catalyses the reaction L-methionyl-tRNA(fMet) + (6R)-10-formyltetrahydrofolate = N-formyl-L-methionyl-tRNA(fMet) + (6S)-5,6,7,8-tetrahydrofolate + H(+). Attaches a formyl group to the free amino group of methionyl-tRNA(fMet). The formyl group appears to play a dual role in the initiator identity of N-formylmethionyl-tRNA by promoting its recognition by IF2 and preventing the misappropriation of this tRNA by the elongation apparatus. In Sinorhizobium medicae (strain WSM419) (Ensifer medicae), this protein is Methionyl-tRNA formyltransferase.